A 245-amino-acid polypeptide reads, in one-letter code: Ribonuclease 3 (245 aa).

One can recognise an RNase III domain in the interval 24–146 (YTVFSQKLGY…IIGAIYLESG (123 aa)). E59 lines the Mg(2+) pocket. Residue D63 is part of the active site. 2 residues coordinate Mg(2+): N132 and E135. E135 is an active-site residue. The DRBM domain occupies 173–243 (DPKTLLQEYL…ARRAYKLAVV (71 aa)).

The protein belongs to the ribonuclease III family. As to quaternary structure, homodimer. Mg(2+) is required as a cofactor.

It localises to the cytoplasm. It carries out the reaction Endonucleolytic cleavage to 5'-phosphomonoester.. Digests double-stranded RNA. Involved in the processing of primary rRNA transcript to yield the immediate precursors to the large and small rRNAs (23S and 16S). Processes some mRNAs, and tRNAs when they are encoded in the rRNA operon. Processes pre-crRNA and tracrRNA of type II CRISPR loci if present in the organism. In Nitrosomonas eutropha (strain DSM 101675 / C91 / Nm57), this protein is Ribonuclease 3.